We begin with the raw amino-acid sequence, 330 residues long: Delta-aminolevulinic acid dehydratase (330 aa).

Positions 122, 124, 131, and 132 each coordinate Zn(2+). Lysine 199 functions as the Schiff-base intermediate with substrate in the catalytic mechanism. Lysine 199 is modified (N6-succinyllysine). Arginine 209 provides a ligand contact to 5-aminolevulinate. Serine 215 is subject to Phosphoserine. Arginine 221 contributes to the 5-aminolevulinate binding site. Cysteine 223 is a binding site for Zn(2+). The active-site Schiff-base intermediate with substrate is lysine 252. Residue lysine 252 is modified to N6-succinyllysine. Residue serine 279 coordinates 5-aminolevulinate.

Belongs to the ALAD family. As to quaternary structure, homooctamer; active form. Homohexamer; low activity form. Zn(2+) serves as cofactor.

The protein localises to the cytoplasm. It localises to the cytosol. The enzyme catalyses 2 5-aminolevulinate = porphobilinogen + 2 H2O + H(+). Its pathway is porphyrin-containing compound metabolism; protoporphyrin-IX biosynthesis; coproporphyrinogen-III from 5-aminolevulinate: step 1/4. Can alternate between a fully active homooctamer and a low-activity homohexamer. A bound magnesium ion may promote the assembly of the fully active homooctamer. The magnesium-binding site is absent in the low-activity homohexamer. Inhibited by compounds that favor the hexameric state. Inhibited by divalent lead ions. The lead ions partially displace the zinc cofactor. Catalyzes an early step in the biosynthesis of tetrapyrroles. Binds two molecules of 5-aminolevulinate per subunit, each at a distinct site, and catalyzes their condensation to form porphobilinogen. The protein is Delta-aminolevulinic acid dehydratase (ALAD) of Pongo abelii (Sumatran orangutan).